The sequence spans 311 residues: tRNA pseudouridine synthase B (311 aa).

Residue D39 is the Nucleophile of the active site. The interval 237–268 (RELSEQETTEISFGRRIAAGPGAGTPDAATAE) is disordered. Residues 254–268 (AAGPGAGTPDAATAE) show a composition bias toward low complexity.

Belongs to the pseudouridine synthase TruB family. Type 1 subfamily.

It catalyses the reaction uridine(55) in tRNA = pseudouridine(55) in tRNA. Functionally, responsible for synthesis of pseudouridine from uracil-55 in the psi GC loop of transfer RNAs. This chain is tRNA pseudouridine synthase B, found in Paenarthrobacter aurescens (strain TC1).